A 141-amino-acid polypeptide reads, in one-letter code: Brain ribonuclease (141 aa).

Residues 1 to 25 form a disordered region; it reads KETAAAKFRRQHMDSGSSSSSNSNY. Residues lysine 7 and arginine 10 each contribute to the substrate site. Histidine 12 (proton acceptor) is an active-site residue. The span at 15–24 shows a compositional bias: low complexity; the sequence is SGSSSSSNSN. 4 cysteine pairs are disulfide-bonded: cysteine 26–cysteine 84, cysteine 40–cysteine 95, cysteine 58–cysteine 110, and cysteine 65–cysteine 72. 41–45 contributes to the substrate binding site; that stretch reads KPVNT. An N-linked (GlcNAc...) asparagine glycan is attached at asparagine 62. Substrate contacts are provided by lysine 66 and arginine 85. Histidine 119 serves as the catalytic Proton donor. Residue threonine 129 is glycosylated (O-linked (GalNAc...) threonine).

The protein belongs to the pancreatic ribonuclease family.

It localises to the secreted. This chain is Brain ribonuclease (BRN), found in Giraffa camelopardalis (Giraffe).